The sequence spans 395 residues: Elongation factor Tu (395 aa).

In terms of domain architecture, tr-type G spans 10 to 204 (KSHVNVGTLG…AVDEYIPTPE (195 aa)). Residues 19–26 (GHVDHGKT) form a G1 region. 19–26 (GHVDHGKT) lines the GTP pocket. Threonine 26 is a Mg(2+) binding site. Residues 60–64 (GITIS) form a G2 region. The segment at 81–84 (DCPG) is G3. GTP is bound by residues 81–85 (DCPGH) and 136–139 (NKTD). Residues 136–139 (NKTD) form a G4 region. The tract at residues 174 to 176 (SAL) is G5.

The protein belongs to the TRAFAC class translation factor GTPase superfamily. Classic translation factor GTPase family. EF-Tu/EF-1A subfamily. Monomer.

The protein resides in the cytoplasm. The enzyme catalyses GTP + H2O = GDP + phosphate + H(+). Functionally, GTP hydrolase that promotes the GTP-dependent binding of aminoacyl-tRNA to the A-site of ribosomes during protein biosynthesis. In Oceanobacillus iheyensis (strain DSM 14371 / CIP 107618 / JCM 11309 / KCTC 3954 / HTE831), this protein is Elongation factor Tu.